The chain runs to 266 residues: Tryptophan synthase alpha chain (266 aa).

Residues glutamate 49 and aspartate 60 each act as proton acceptor in the active site.

This sequence belongs to the TrpA family. In terms of assembly, tetramer of two alpha and two beta chains.

The enzyme catalyses (1S,2R)-1-C-(indol-3-yl)glycerol 3-phosphate + L-serine = D-glyceraldehyde 3-phosphate + L-tryptophan + H2O. It participates in amino-acid biosynthesis; L-tryptophan biosynthesis; L-tryptophan from chorismate: step 5/5. Functionally, the alpha subunit is responsible for the aldol cleavage of indoleglycerol phosphate to indole and glyceraldehyde 3-phosphate. This chain is Tryptophan synthase alpha chain, found in Trichormus variabilis (strain ATCC 29413 / PCC 7937) (Anabaena variabilis).